A 289-amino-acid polypeptide reads, in one-letter code: 4-hydroxy-3-methylbut-2-enyl diphosphate reductase (289 aa).

[4Fe-4S] cluster is bound at residue C13. Positions 42 and 76 each coordinate (2E)-4-hydroxy-3-methylbut-2-enyl diphosphate. The dimethylallyl diphosphate site is built by H42 and H76. H42 and H76 together coordinate isopentenyl diphosphate. C98 serves as a coordination point for [4Fe-4S] cluster. H130 contributes to the (2E)-4-hydroxy-3-methylbut-2-enyl diphosphate binding site. H130 is a dimethylallyl diphosphate binding site. An isopentenyl diphosphate-binding site is contributed by H130. Catalysis depends on E132, which acts as the Proton donor. T168 serves as a coordination point for (2E)-4-hydroxy-3-methylbut-2-enyl diphosphate. C199 provides a ligand contact to [4Fe-4S] cluster. The (2E)-4-hydroxy-3-methylbut-2-enyl diphosphate site is built by S227, S228, N229, and S272. Dimethylallyl diphosphate-binding residues include S227, S228, N229, and S272. S227, S228, N229, and S272 together coordinate isopentenyl diphosphate.

This sequence belongs to the IspH family. [4Fe-4S] cluster serves as cofactor.

The catalysed reaction is isopentenyl diphosphate + 2 oxidized [2Fe-2S]-[ferredoxin] + H2O = (2E)-4-hydroxy-3-methylbut-2-enyl diphosphate + 2 reduced [2Fe-2S]-[ferredoxin] + 2 H(+). The enzyme catalyses dimethylallyl diphosphate + 2 oxidized [2Fe-2S]-[ferredoxin] + H2O = (2E)-4-hydroxy-3-methylbut-2-enyl diphosphate + 2 reduced [2Fe-2S]-[ferredoxin] + 2 H(+). Its pathway is isoprenoid biosynthesis; dimethylallyl diphosphate biosynthesis; dimethylallyl diphosphate from (2E)-4-hydroxy-3-methylbutenyl diphosphate: step 1/1. The protein operates within isoprenoid biosynthesis; isopentenyl diphosphate biosynthesis via DXP pathway; isopentenyl diphosphate from 1-deoxy-D-xylulose 5-phosphate: step 6/6. Catalyzes the conversion of 1-hydroxy-2-methyl-2-(E)-butenyl 4-diphosphate (HMBPP) into a mixture of isopentenyl diphosphate (IPP) and dimethylallyl diphosphate (DMAPP). Acts in the terminal step of the DOXP/MEP pathway for isoprenoid precursor biosynthesis. This is 4-hydroxy-3-methylbut-2-enyl diphosphate reductase from Porphyromonas gingivalis (strain ATCC BAA-308 / W83).